A 249-amino-acid chain; its full sequence is Zinc import ATP-binding protein ZnuC (249 aa).

An ABC transporter domain is found at 1–219 (MRLVSLRNAT…PEYQALFGSG (219 aa)). 36-43 (GPNGSGKS) is an ATP binding site.

The protein belongs to the ABC transporter superfamily. Zinc importer (TC 3.A.1.15.5) family. In terms of assembly, the complex is composed of two ATP-binding proteins (ZnuC), two transmembrane proteins (ZnuB) and a solute-binding protein (ZnuA).

It is found in the cell inner membrane. The enzyme catalyses Zn(2+)(out) + ATP(in) + H2O(in) = Zn(2+)(in) + ADP(in) + phosphate(in) + H(+)(in). In terms of biological role, part of the ABC transporter complex ZnuABC involved in zinc import. Responsible for energy coupling to the transport system. In Ruegeria sp. (strain TM1040) (Silicibacter sp.), this protein is Zinc import ATP-binding protein ZnuC.